We begin with the raw amino-acid sequence, 238 residues long: Ureidoacrylate amidohydrolase RutB (238 aa).

The active-site Proton acceptor is the aspartate 35. Lysine 144 is an active-site residue. The active-site Nucleophile is the cysteine 177.

This sequence belongs to the isochorismatase family. RutB subfamily.

It carries out the reaction (Z)-3-ureidoacrylate + H2O + H(+) = (Z)-3-aminoacrylate + NH4(+) + CO2. It catalyses the reaction (Z)-3-ureidoacrylate + H2O = (Z)-3-aminoacrylate + carbamate + H(+). The enzyme catalyses (Z)-2-methylureidoacrylate + H2O + H(+) = (Z)-2-methylaminoacrylate + NH4(+) + CO2. Functionally, hydrolyzes ureidoacrylate to form aminoacrylate and carbamate. The carbamate hydrolyzes spontaneously, thereby releasing one of the nitrogen atoms of the pyrimidine ring as ammonia and one of its carbon atoms as CO2. The sequence is that of Ureidoacrylate amidohydrolase RutB from Caulobacter vibrioides (strain NA1000 / CB15N) (Caulobacter crescentus).